Here is a 159-residue protein sequence, read N- to C-terminus: 2-C-methyl-D-erythritol 2,4-cyclodiphosphate synthase (159 aa).

Positions 11 and 13 each coordinate a divalent metal cation. 4-CDP-2-C-methyl-D-erythritol 2-phosphate-binding positions include 11–13 (DVH) and 37–38 (HS). H45 is an a divalent metal cation binding site. Residues 59–61 (DIG) and 64–68 (FPDSD) each bind 4-CDP-2-C-methyl-D-erythritol 2-phosphate.

This sequence belongs to the IspF family. As to quaternary structure, homotrimer. It depends on a divalent metal cation as a cofactor.

It catalyses the reaction 4-CDP-2-C-methyl-D-erythritol 2-phosphate = 2-C-methyl-D-erythritol 2,4-cyclic diphosphate + CMP. It participates in isoprenoid biosynthesis; isopentenyl diphosphate biosynthesis via DXP pathway; isopentenyl diphosphate from 1-deoxy-D-xylulose 5-phosphate: step 4/6. Functionally, involved in the biosynthesis of isopentenyl diphosphate (IPP) and dimethylallyl diphosphate (DMAPP), two major building blocks of isoprenoid compounds. Catalyzes the conversion of 4-diphosphocytidyl-2-C-methyl-D-erythritol 2-phosphate (CDP-ME2P) to 2-C-methyl-D-erythritol 2,4-cyclodiphosphate (ME-CPP) with a corresponding release of cytidine 5-monophosphate (CMP). The polypeptide is 2-C-methyl-D-erythritol 2,4-cyclodiphosphate synthase (Solibacter usitatus (strain Ellin6076)).